The chain runs to 42 residues: Small, acid-soluble spore protein L (42 aa).

Positions 1–42 (MKKKDKGRLTGGVTPQGDLEGNTHNDPKTELEERAKKSNTKR) are disordered. A compositionally biased stretch (basic and acidic residues) spans 21 to 36 (GNTHNDPKTELEERAK).

The protein localises to the spore core. This is Small, acid-soluble spore protein L (sspL) from Bacillus subtilis (strain 168).